Reading from the N-terminus, the 968-residue chain is Isoleucine--tRNA ligase (968 aa).

The 'HIGH' region signature appears at 68–78 (PYANGALHMGH). Glu582 is a binding site for L-isoleucyl-5'-AMP. The short motif at 623–627 (KMSKS) is the 'KMSKS' region element. Lys626 is a binding site for ATP. Residues Cys936, Cys939, Cys956, and Cys959 each coordinate Zn(2+).

Belongs to the class-I aminoacyl-tRNA synthetase family. IleS type 1 subfamily. Monomer. Zn(2+) serves as cofactor.

It is found in the cytoplasm. The enzyme catalyses tRNA(Ile) + L-isoleucine + ATP = L-isoleucyl-tRNA(Ile) + AMP + diphosphate. Catalyzes the attachment of isoleucine to tRNA(Ile). As IleRS can inadvertently accommodate and process structurally similar amino acids such as valine, to avoid such errors it has two additional distinct tRNA(Ile)-dependent editing activities. One activity is designated as 'pretransfer' editing and involves the hydrolysis of activated Val-AMP. The other activity is designated 'posttransfer' editing and involves deacylation of mischarged Val-tRNA(Ile). This chain is Isoleucine--tRNA ligase, found in Prochlorococcus marinus (strain MIT 9312).